The chain runs to 1189 residues: Phosphatidylinositol 3,4,5-trisphosphate 5-phosphatase 1 (1189 aa).

The SH2 domain maps to 5–101 (WNHGNITRSK…GLVTHLQYPV (97 aa)). Positions 103-117 (LEEEDTGDDPEEDTV) are enriched in acidic residues. Residues 103–132 (LEEEDTGDDPEEDTVESVVSPPELPPRNIP) are disordered. An SH3-binding 1 motif is present at residues 124 to 129 (PELPPR). The residue at position 243 (serine 243) is a Phosphoserine. Positions 870 to 906 (TERDESSGPKTLKSLTSHDPMKQWEVTSRAPPCSGSS) are disordered. Positions 912-915 (NPNY) match the NPXY motif 1 motif. At tyrosine 915 the chain carries Phosphotyrosine. The tract at residues 922-1189 (GPPMPLHVKQ…PGPLGRTAMQ (268 aa)) is disordered. Over residues 931–943 (QTLSPDQQPTAWS) the composition is skewed to polar residues. A Phosphoserine modification is found at serine 934. Phosphotyrosine is present on tyrosine 944. Serine 960 is subject to Phosphoserine. Positions 961-971 (PPTPPGQPPIS) are enriched in pro residues. Threonine 963 carries the post-translational modification Phosphothreonine. The short motif at 969-974 (PISPKK) is the SH3-binding 2 element. Residue serine 971 is modified to Phosphoserine. The segment at 1016–1030 (MFENPLYGSLSSFPK) is interaction with DAB2. Positions 1019–1022 (NPLY) match the NPXY motif 2 motif. A Phosphotyrosine modification is found at tyrosine 1022. Over residues 1033 to 1047 (PRKDQESPKMPRKEP) the composition is skewed to basic and acidic residues. The short motif at 1040 to 1051 (PKMPRKEPPPCP) is the SH3-binding 3 element. Residues 1134–1145 (PPTPTPRPPLPV) show a composition bias toward pro residues. The segment covering 1157–1177 (KGRDYRDNTELPHHGKHRPEE) has biased composition (basic and acidic residues).

This sequence belongs to the inositol 1,4,5-trisphosphate 5-phosphatase family. As to quaternary structure, interacts with tyrosine phosphorylated form of SHC1. Interacts with tyrosine phosphorylated form of DOK1. Interacts with tyrosine phosphorylated form of DOK3. Interacts with tyrosine phosphorylated form of SLAMF1/CD150. Interacts with PTPN11 in response to IL-3. Interacts with receptor EPOR. Interacts with receptors MS4A2/FCER1B and FCER1G. Interacts with receptors FCGR2B and FCGR3. Interacts with receptor FCGR2A, leading to regulate gene expression during the phagocytic process. Interacts with GRB2. Interacts with PLCG1. Interacts with tyrosine kinases SRC and TEC. Interacts with c-Met/MET. Interacts with MILR1 (tyrosine-phosphorylated). Can weakly interact (via NPXY motif 2) with DAB2 (via PID domain); the interaction is impaired by tyrosine phosphorylation of the NPXY motif. Interacts with FCRL3 and FCRL6 (tyrosine phosphorylated form). Interacts (via SH2 domain) with tyrosine phosphorylated KLRC1 (via ITIM). Interacts with MPL/TPOR. Post-translationally, tyrosine phosphorylated by the members of the SRC family after exposure to a diverse array of extracellular stimuli such as cytokines, growth factors, antibodies, chemokines, integrin ligands and hypertonic and oxidative stress. Phosphorylated upon IgG receptor FCGR2B-binding. Specifically expressed in immune and hematopoietic cells. Expressed in bone marrow and blood cells. Levels vary considerably within this compartment. Present in at least 74% of immature CD34+ cells, whereas within the more mature population of CD33+ cells, it is present in only 10% of cells. Present in the majority of T-cells, while it is present in a minority of B-cells (at protein level).

Its subcellular location is the cytoplasm. The protein localises to the cell membrane. It localises to the membrane raft. The protein resides in the cytoskeleton. It is found in the membrane. It carries out the reaction a 1,2-diacyl-sn-glycero-3-phospho-(1D-myo-inositol-3,4,5-trisphosphate) + H2O = a 1,2-diacyl-sn-glycero-3-phospho-(1D-myo-inositol-3,4-bisphosphate) + phosphate. The catalysed reaction is 1D-myo-inositol 1,3,4,5-tetrakisphosphate + H2O = 1D-myo-inositol 1,3,4-trisphosphate + phosphate. The enzyme catalyses a 1,2-diacyl-sn-glycero-3-phospho-(1D-myo-inositol-4,5-bisphosphate) + H2O = a 1,2-diacyl-sn-glycero-3-phospho-(1D-myo-inositol 4-phosphate) + phosphate. Its activity is regulated as follows. Activated upon translocation to the sites of synthesis of PtdIns(3,4,5)P3 in the membrane. In terms of biological role, phosphatidylinositol (PtdIns) phosphatase that specifically hydrolyzes the 5-phosphate of phosphatidylinositol-3,4,5-trisphosphate (PtdIns(3,4,5)P3) to produce PtdIns(3,4)P2, thereby negatively regulating the PI3K (phosphoinositide 3-kinase) pathways. Able also to hydrolyzes the 5-phosphate of phosphatidylinositol-4,5-bisphosphate (PtdIns(4,5)P3) and inositol 1,3,4,5-tetrakisphosphate. Acts as a negative regulator of B-cell antigen receptor signaling. Mediates signaling from the FC-gamma-RIIB receptor (FCGR2B), playing a central role in terminating signal transduction from activating immune/hematopoietic cell receptor systems. Acts as a negative regulator of myeloid cell proliferation/survival and chemotaxis, mast cell degranulation, immune cells homeostasis, integrin alpha-IIb/beta-3 signaling in platelets and JNK signaling in B-cells. Regulates proliferation of osteoclast precursors, macrophage programming, phagocytosis and activation and is required for endotoxin tolerance. Involved in the control of cell-cell junctions, CD32a signaling in neutrophils and modulation of EGF-induced phospholipase C activity. Key regulator of neutrophil migration, by governing the formation of the leading edge and polarization required for chemotaxis. Modulates FCGR3/CD16-mediated cytotoxicity in NK cells. Mediates the activin/TGF-beta-induced apoptosis through its Smad-dependent expression. The polypeptide is Phosphatidylinositol 3,4,5-trisphosphate 5-phosphatase 1 (INPP5D) (Homo sapiens (Human)).